We begin with the raw amino-acid sequence, 165 residues long: MSAKGAGGARGRGAEGEKIVATNRRARFDFTIEDSWEAGLVLTGSEVKSLREGNVNLSDAYALPRGDELFLVNCRIGEYKQAAHFGHEPLRDRKLLMNRPELDRVKGKIEQRGYTLVPLRLYFKQGWAKVELGLAKGRSHEDRRHAIAERETKREMDREISRRRR.

A disordered region spans residues 141-165; that stretch reads EDRRHAIAERETKREMDREISRRRR.

Belongs to the SmpB family.

It localises to the cytoplasm. Required for rescue of stalled ribosomes mediated by trans-translation. Binds to transfer-messenger RNA (tmRNA), required for stable association of tmRNA with ribosomes. tmRNA and SmpB together mimic tRNA shape, replacing the anticodon stem-loop with SmpB. tmRNA is encoded by the ssrA gene; the 2 termini fold to resemble tRNA(Ala) and it encodes a 'tag peptide', a short internal open reading frame. During trans-translation Ala-aminoacylated tmRNA acts like a tRNA, entering the A-site of stalled ribosomes, displacing the stalled mRNA. The ribosome then switches to translate the ORF on the tmRNA; the nascent peptide is terminated with the 'tag peptide' encoded by the tmRNA and targeted for degradation. The ribosome is freed to recommence translation, which seems to be the essential function of trans-translation. The sequence is that of SsrA-binding protein from Anaeromyxobacter sp. (strain Fw109-5).